The primary structure comprises 608 residues: Ceramide kinase (608 aa).

The region spanning 160 to 367 (ERPRNLLVFV…LDAMQVVRWK (208 aa)) is the DAGKc domain. Residues 170 to 174 (HPKSG), Thr-201, and 230 to 236 (GDGFFNE) contribute to the ATP site. 229-232 (GGDG) provides a ligand contact to substrate. Catalysis depends on Asp-231, which acts as the Proton donor/acceptor. Positions 254–280 (PSDSFNSVQSRGSSSVPEPGDEVHETD) are disordered. The span at 255-269 (SDSFNSVQSRGSSSV) shows a compositional bias: polar residues. Ser-329 contacts ATP.

Requires Ca(2+) as cofactor.

The catalysed reaction is an N-acylsphing-4-enine + ATP = an N-acylsphing-4-enine 1-phosphate + ADP + H(+). Catalyzes specifically the phosphorylation of ceramide to form ceramide 1-phosphate. Possesses high activity on ceramide analogs (C6, C8 synthetic ceramides) and lower activity on C6 and C8 dihydroceramides. Has weak activity on natural ceramides (a mixture of ceramides from bovine brain) and the synthetic substrate C2 ceramide. Has very poor activity on diacylglycerol and sphingosine. Ceramide is a critical sphingolipid metabolite that induces programmed cell death (PCD) in plants and ceramide-1-phosphate has a PCD suppressive effect. Thus, ceramide phosphorylation plays a role in the modulation of PCD and CERK activity is crucial for the maintenance of cell viability. This chain is Ceramide kinase (CERK), found in Arabidopsis thaliana (Mouse-ear cress).